The chain runs to 555 residues: Carboxysome assembly protein CcmM (555 aa).

The tract at residues 1-209 (MAVRSTAAPP…CIAPLRNDQV (209 aa)) is has carbonic anhydrase (CA) activity. Glu-56 serves as the catalytic Proton donor/acceptor. Residues His-75, His-102, and His-107 each contribute to the Zn(2+) site. The cysteines at positions 194 and 200 are disulfide-linked. The tract at residues 223–315 (SSEVASNSLG…RVLETIIQRP (93 aa)) is rbcS-like repeat 1, SSUL1. 2 disordered regions span residues 323 to 351 (TSFK…SNGA) and 441 to 464 (NGQV…SGTA). 2 stretches are compositionally biased toward low complexity: residues 330–351 (SNTN…SNGA) and 445–464 (APSS…SGTA). The tract at residues 347-440 (YSNGATSGKV…RVLESIIQRP (94 aa)) is rbcS-like repeat 2, SSUL2. Residues 460 to 555 (SSGTATATAT…RVLETIIQRP (96 aa)) are rbcS-like repeat 3, SSUL3.

This sequence belongs to the gamma-class carbonic anhydrase family. As to quaternary structure, probable homotrimer; zinc is bound between adjacent monomers. Full length protein (M58) interacts with CcmN. The C-terminal RbcS-like domains (SSUL) bind to holo-RuBisCO, as does the M35 short form. Zn(2+) is required as a cofactor. Post-translationally, the first amino acid of the short form (equivalent to Val-226) is not seen in Edman degradation, while Ser-230 may be post-translationally modified. Migrates in gels as 2 about equal forms of about 60 and 35 kDa (called M58 and M35). They are probably the result of alternative translation initiation.

It is found in the carboxysome. The protein localises to the cytoplasm. It catalyses the reaction hydrogencarbonate + H(+) = CO2 + H2O. Its activity is regulated as follows. Carbonic anhydrase (CA) activity is probably under redox control to remain inactive in the cytoplasm. Carbonic anhydrase (CA) activity of full-length protein and N-terminal fragment is inhibited by ethoxyzolamide. N-terminal fragment CA activity is activated under oxidizing conditions and inhibited under reducing conditions. Functionally, functions as a scaffold protein for the assembly of beta-carboxysomes, initiates carboxysome assembly by coalescing RuBisCO (ribulose bisphosphate carboxylase, rbcL-rbcS). Produced as a full-length (M58) and a short form (M35), possibly by alternative translation initiation; probably both forms are required for correct carboxysome assembly and growth. In this strain both forms are equally abundant. A moderately active carbonic anhydrase that catalyzes the reversible hydration of carbon dioxide. Essential to photosynthetic carbon dioxide fixation, supplies CO(2) to ribulose bisphosphate carboxylase (RuBisCO) in the carboxysome. Also hydrolyzes COS. In terms of biological role, beta-carboxysome assembly initiates when soluble RuBisCO is condensed into a liquid matrix in a pre-carboxysome by the RbcS-like domains of probably both forms of CcmM. CcmN interacts with the N-terminus of full length CcmM, and then recruits the shell proteins (CcmK) via CcmN's encapsulation peptide. Shell formation requires both CcmK proteins and CcmO. CcmL caps the otherwise elongated carboxysome. Once fully encapsulated carboxysomes are formed, they migrate within the cell probably via interactions with the cytoskeleton. The protein is Carboxysome assembly protein CcmM of Nostoc sp. (strain PCC 7120 / SAG 25.82 / UTEX 2576).